Reading from the N-terminus, the 137-residue chain is MPTINQLVRKGRKSHKGKSKSPALGFVYNSFKKEEIKNPSPQKRGVATRVGTMTPKKPNSALRKYARVRLSNLIEVTAYIPGIGHNLQEHSVVLIRGGRVKDLPGVRYHIIRGTLDTAGVDGRMQSRSKYGAKKPKK.

Disordered regions lie at residues 1–22 (MPTI…SKSP) and 37–57 (KNPS…TPKK). Over residues 9 to 19 (RKGRKSHKGKS) the composition is skewed to basic residues. The residue at position 102 (Asp102) is a 3-methylthioaspartic acid.

This sequence belongs to the universal ribosomal protein uS12 family. As to quaternary structure, part of the 30S ribosomal subunit. Contacts proteins S8 and S17. May interact with IF1 in the 30S initiation complex.

With S4 and S5 plays an important role in translational accuracy. Its function is as follows. Interacts with and stabilizes bases of the 16S rRNA that are involved in tRNA selection in the A site and with the mRNA backbone. Located at the interface of the 30S and 50S subunits, it traverses the body of the 30S subunit contacting proteins on the other side and probably holding the rRNA structure together. The combined cluster of proteins S8, S12 and S17 appears to hold together the shoulder and platform of the 30S subunit. This chain is Small ribosomal subunit protein uS12, found in Limosilactobacillus fermentum (strain NBRC 3956 / LMG 18251) (Lactobacillus fermentum).